The following is a 133-amino-acid chain: Small ribosomal subunit protein uS8 (133 aa).

The protein belongs to the universal ribosomal protein uS8 family. Part of the 30S ribosomal subunit. Contacts proteins S5 and S12.

Its function is as follows. One of the primary rRNA binding proteins, it binds directly to 16S rRNA central domain where it helps coordinate assembly of the platform of the 30S subunit. This is Small ribosomal subunit protein uS8 from Chlamydia abortus (strain DSM 27085 / S26/3) (Chlamydophila abortus).